The primary structure comprises 295 residues: Protease HtpX (295 aa).

2 helical membrane passes run isoleucine 4–leucine 24 and glutamine 42–serine 62. Position 147 (histidine 147) interacts with Zn(2+). The active site involves glutamate 148. Histidine 151 serves as a coordination point for Zn(2+). 2 helical membrane passes run valine 158 to isoleucine 178 and valine 199 to phenylalanine 219. Glutamate 224 contacts Zn(2+).

Belongs to the peptidase M48B family. The cofactor is Zn(2+).

Its subcellular location is the cell inner membrane. This is Protease HtpX from Pseudomonas fluorescens (strain ATCC BAA-477 / NRRL B-23932 / Pf-5).